Here is a 73-residue protein sequence, read N- to C-terminus: Translation initiation factor IF-1 (73 aa).

The S1-like domain occupies 1-73 (MGKKEEAFEV…TKGRIVYRER (73 aa)).

This sequence belongs to the IF-1 family. As to quaternary structure, component of the 30S ribosomal translation pre-initiation complex which assembles on the 30S ribosome in the order IF-2 and IF-3, IF-1 and N-formylmethionyl-tRNA(fMet); mRNA recruitment can occur at any time during PIC assembly.

The protein resides in the cytoplasm. Its function is as follows. One of the essential components for the initiation of protein synthesis. Stabilizes the binding of IF-2 and IF-3 on the 30S subunit to which N-formylmethionyl-tRNA(fMet) subsequently binds. Helps modulate mRNA selection, yielding the 30S pre-initiation complex (PIC). Upon addition of the 50S ribosomal subunit IF-1, IF-2 and IF-3 are released leaving the mature 70S translation initiation complex. In Rhodopirellula baltica (strain DSM 10527 / NCIMB 13988 / SH1), this protein is Translation initiation factor IF-1.